A 1985-amino-acid chain; its full sequence is Voltage-dependent L-type calcium channel subunit alpha-1F (1985 aa).

Basic and acidic residues predominate over residues 1–11; that stretch reads MSESEVGKDTT. Positions 1 to 56 are disordered; that stretch reads MSESEVGKDTTPEPSPANGTGPGPEWGLCPGPPTVGTDTSGASGLGTPRRRTQHNK. Residues 1–92 are Cytoplasmic-facing; sequence MSESEVGKDT…RSCISIVEWK (92 aa). One copy of the I repeat lies at 79–375; the sequence is NPIRRSCISI…LVLGVLSGEF (297 aa). A helical membrane pass occupies residues 93–111; that stretch reads PFDILILLTIFANCVALGV. Residues 112–129 lie on the Extracellular side of the membrane; sequence YIPFPEDDSNTANHNLEQ. A helical membrane pass occupies residues 130 to 149; the sequence is VEYVFLVIFTVETVLKIVAY. At 150 to 161 the chain is on the cytoplasmic side; that stretch reads GLVLHPSAYIRN. The chain crosses the membrane as a helical span at residues 162–180; it reads GWNLLDFIIVVVGLFSVLL. The Extracellular segment spans residues 181-201; the sequence is EQGPGRPGDAPHTGGKPGGFD. Residues 202-220 traverse the membrane as a helical segment; it reads VKALRAFRVLRPLRLVSGV. Over 221–239 the chain is Cytoplasmic; that stretch reads PSLHIVVNSIMKALVPLLH. Residues 240–259 traverse the membrane as a helical segment; sequence IALLVLFVIIIYAIIGLELF. Residues 260–347 lie on the Extracellular side of the membrane; sequence LGRMHKTCYF…WMQDAMGYEL (88 aa). N-linked (GlcNAc...) asparagine glycosylation is present at Asn295. Ca(2+) is bound at residue Glu330. A helical transmembrane segment spans residues 348-372; the sequence is PWVYFVSLVIFGSFFVLNLVLGVLS. Residues 373–529 lie on the Cytoplasmic side of the membrane; it reads GEFSKEREKA…ARCRRAVKSN (157 aa). Residues 395–412 are binding to the beta subunit; it reads QQMEEDLRGYLDWITQAE. A compositionally biased stretch (low complexity) spans 455–469; the sequence is SHSTRSTHSTSSHAS. The disordered stretch occupies residues 455–490; it reads SHSTRSTHSTSSHASLPASDTGSMTDTPGDEDEEEG. One copy of the II repeat lies at 515 to 761; sequence NRGLRARCRR…VFLAIAVDNL (247 aa). A helical transmembrane segment spans residues 530–549; it reads ACYWAVLLLVFLNTLTIASE. The Extracellular portion of the chain corresponds to 550–564; that stretch reads HHGQPLWLTQTQEYA. A helical transmembrane segment spans residues 565–583; that stretch reads NKVLLCLFTVEMLLKLYGL. At 584–591 the chain is on the cytoplasmic side; the sequence is GPSVYVAS. The chain crosses the membrane as a helical span at residues 592-610; sequence FFNRFDCFVVCGGILETTL. The Extracellular segment spans residues 611–620; it reads VEVGAMQPLG. Residues 621–639 traverse the membrane as a helical segment; that stretch reads ISVLRCVRLLRIFKVTRHW. Over 640–658 the chain is Cytoplasmic; that stretch reads ASLSNLVASLLNSMKSIAS. The chain crosses the membrane as a helical span at residues 659–679; that stretch reads LLLLLFLFIIIFSLLGMQLFG. At 680-733 the chain is on the extracellular side; sequence GKFNFDQTHTKRSTFDTFPQALLTVFQILTGEDWNVVMYDGIMAYGGPFFPGML. Residue Glu711 participates in Ca(2+) binding. A helical transmembrane segment spans residues 734-758; the sequence is VCVYFIILFICGNYILLNVFLAIAV. At 759–876 the chain is on the cytoplasmic side; that stretch reads DNLASGDAGT…KACHTLIHHH (118 aa). Residues 766–834 form a disordered region; sequence AGTAKDKGRE…EEEEENGAGH (69 aa). Residues 768-787 show a composition bias toward basic and acidic residues; that stretch reads TAKDKGREKSSEGNPPKENK. Positions 810 to 830 are enriched in acidic residues; it reads MEEEEEEEEEEEEEEEEEEEN. The III repeat unit spans residues 858-1140; sequence CLSQTNPLRK…FFMMNIFVGF (283 aa). The helical transmembrane segment at 877–895 threads the bilayer; that stretch reads IFTSLILVFIILSSVSLAA. The Extracellular portion of the chain corresponds to 896–911; the sequence is EDPIRAHSFRNHILGY. The helical transmembrane segment at 912-931 threads the bilayer; sequence FDYAFTSIFTVEILLKMTVF. The Cytoplasmic segment spans residues 932-943; that stretch reads GAFLHRGSFCRS. A helical membrane pass occupies residues 944–962; sequence WFNLLDLLVVSVSLISFGI. At 963–968 the chain is on the extracellular side; sequence HSSAIS. A helical membrane pass occupies residues 969–988; the sequence is VVKILRVLRVLRPLRAINRA. Residues 989–1007 are Cytoplasmic-facing; the sequence is KGLKHVVQCVFVAIRTIGN. The chain crosses the membrane as a helical span at residues 1008-1027; sequence IMIVTTLLQFMFACIGVQLF. Topologically, residues 1028 to 1117 are extracellular; it reads KGKFYSCTDE…EGPIYNYHVE (90 aa). The dihydropyridine binding stretch occupies residues 1065–1155; it reads RLWVNSDFNF…RAQGEQEYQN (91 aa). Glu1091 contacts Ca(2+). Residues 1118-1138 traverse the membrane as a helical segment; sequence ISVFFIVYIIIIAFFMMNIFV. The Cytoplasmic segment spans residues 1139 to 1195; it reads GFVIITFRAQGEQEYQNCELDKNQRQCVEYALKAQPLRRYIPKNPHQYRVWATVNSR. An IV repeat occupies 1182–1449; sequence NPHQYRVWAT…LFVAVIMDNF (268 aa). The chain crosses the membrane as a helical span at residues 1196–1214; that stretch reads AFEYLMFLLILLNTVALAM. The Extracellular portion of the chain corresponds to 1215–1229; that stretch reads QHYEQTAPFNYAMDI. A helical transmembrane segment spans residues 1230-1249; it reads LNMVFTGLFTIEMVLKIIAF. Topologically, residues 1250 to 1256 are cytoplasmic; sequence KPKHYFA. The helical transmembrane segment at 1257–1278 threads the bilayer; it reads DAWNTFDALIVVGSVVDIAVTE. Over 1279–1295 the chain is Extracellular; that stretch reads VNNGGHLGESSEDTSRI. A helical transmembrane segment spans residues 1296–1315; the sequence is SITFFRLFRVMRLVKLLSKG. Topologically, residues 1316–1334 are cytoplasmic; the sequence is EGIRTLLWTFIKSFQALPY. A helical transmembrane segment spans residues 1335 to 1354; that stretch reads VALLIAMIFFIYAVIGMQMF. Residues 1355 to 1421 are Extracellular-facing; sequence GLVALQDGTQ…GEEFTCGSSF (67 aa). The interval 1402 to 1468 is dihydropyridine binding; it reads RCDPESDFGP…LGPHHLDEFK (67 aa). Positions 1414 to 1457 are phenylalkylamine binding; sequence EFTCGSSFAIVYFISFFMLCAFLIINLFVAVIMDNFDYLTRDWS. Residues 1422–1446 traverse the membrane as a helical segment; it reads AIVYFISFFMLCAFLIINLFVAVIM. Topologically, residues 1447–1982 are cytoplasmic; sequence DNFDYLTRDW…EDLGDEMACV (536 aa). Disordered stretches follow at residues 1643-1729 and 1746-1778; these read VTEE…PHRR and LKGT…SFEP. Residues 1644-1665 are compositionally biased toward acidic residues; sequence TEEEEEEEEAVGQEAEEEEAEN. Composition is skewed to polar residues over residues 1675–1687 and 1713–1724; these read DSQP…SRIS and NSRQPSVIQAGS. A compositionally biased stretch (basic and acidic residues) spans 1767–1776; sequence DLDRAGRDSF.

Belongs to the calcium channel alpha-1 subunit (TC 1.A.1.11) family. CACNA1F subfamily. Voltage-dependent calcium channels are multisubunit complexes, consisting of alpha-1, alpha-2, beta and delta subunits in a 1:1:1:1 ratio. The channel activity is directed by the pore-forming and voltage-sensitive alpha-1 subunit. In many cases, this subunit is sufficient to generate voltage-sensitive calcium channel activity. The auxiliary subunits beta and alpha-2/delta linked by a disulfide bridge regulate the channel activity. Interacts (via IQ domain) with CABP4; in a calcium independent manner. As to expression, expressed in the inner and outer nuclear layers and the genglion cell layer of the retina.

It is found in the membrane. The catalysed reaction is Ca(2+)(in) = Ca(2+)(out). Its function is as follows. Voltage-sensitive calcium channels (VSCC) mediate the entry of calcium ions into excitable cells and are also involved in a variety of calcium-dependent processes, including muscle contraction, hormone or neurotransmitter release, gene expression, cell motility, cell division and cell death. The isoform alpha-1F gives rise to L-type calcium currents. Long-lasting (L-type) calcium channels belong to the 'high-voltage activated' (HVA) group. They are blocked by dihydropyridines (DHP), phenylalkylamines, and by benzothiazepines. Activates at more negative voltages and does not undergo calcium-dependent inactivation (CDI), due to incoming calcium ions, during depolarization. This Mus musculus (Mouse) protein is Voltage-dependent L-type calcium channel subunit alpha-1F.